A 338-amino-acid chain; its full sequence is Oligopeptide transport ATP-binding protein OppD (338 aa).

Positions 7–257 (LEAKQVSVAF…PKHPYTRSLL (251 aa)) constitute an ABC transporter domain. 43–50 (GESGSGKS) is a binding site for ATP.

This sequence belongs to the ABC transporter superfamily. The complex is composed of two ATP-binding proteins (OppD and OppF), two transmembrane proteins (OppB and OppC) and a solute-binding protein (OppA).

Its subcellular location is the cell membrane. The catalysed reaction is a [peptide](out) + ATP + H2O = a [peptide](in) + ADP + phosphate + H(+). In terms of biological role, part of the ABC transporter complex OppABCDF involved in the uptake of oligopeptides. Probably responsible for energy coupling to the transport system. Essential for uptake of peptides larger than three amino acids and for growth in milk. The sequence is that of Oligopeptide transport ATP-binding protein OppD (oppD) from Lactococcus lactis subsp. lactis (strain IL1403) (Streptococcus lactis).